We begin with the raw amino-acid sequence, 769 residues long: 5-methyltetrahydropteroyltriglutamate--homocysteine methyltransferase (769 aa).

Residues 18–21 (RELK) and Lys127 contribute to the 5-methyltetrahydropteroyltri-L-glutamate site. Residues 447–449 (IGS) and Glu500 contribute to the L-homocysteine site. L-methionine contacts are provided by residues 447–449 (IGS) and Glu500. 5-methyltetrahydropteroyltri-L-glutamate contacts are provided by residues 531 to 532 (RC) and Trp577. Asp615 is an L-homocysteine binding site. Asp615 is an L-methionine binding site. A 5-methyltetrahydropteroyltri-L-glutamate-binding site is contributed by Glu621. Zn(2+)-binding residues include His657, Cys659, and Glu681. His710 acts as the Proton donor in catalysis. Cys742 provides a ligand contact to Zn(2+).

The protein belongs to the vitamin-B12 independent methionine synthase family. The cofactor is Zn(2+).

The catalysed reaction is 5-methyltetrahydropteroyltri-L-glutamate + L-homocysteine = tetrahydropteroyltri-L-glutamate + L-methionine. It participates in amino-acid biosynthesis; L-methionine biosynthesis via de novo pathway; L-methionine from L-homocysteine (MetE route): step 1/1. Its function is as follows. Catalyzes the transfer of a methyl group from 5-methyltetrahydrofolate to homocysteine resulting in methionine formation. This Chelativorans sp. (strain BNC1) protein is 5-methyltetrahydropteroyltriglutamate--homocysteine methyltransferase.